Reading from the N-terminus, the 123-residue chain is Large ribosomal subunit protein bL12 (123 aa).

The protein belongs to the bacterial ribosomal protein bL12 family. Homodimer. Part of the ribosomal stalk of the 50S ribosomal subunit. Forms a multimeric L10(L12)X complex, where L10 forms an elongated spine to which 2 to 4 L12 dimers bind in a sequential fashion. Binds GTP-bound translation factors.

Forms part of the ribosomal stalk which helps the ribosome interact with GTP-bound translation factors. Is thus essential for accurate translation. This chain is Large ribosomal subunit protein bL12, found in Mycoplasmopsis synoviae (strain 53) (Mycoplasma synoviae).